The chain runs to 421 residues: Glucose-1-phosphate adenylyltransferase (421 aa).

Alpha-D-glucose 1-phosphate contacts are provided by residues Tyr109, Gly175, 190-191, and Ser208; that span reads EK.

It belongs to the bacterial/plant glucose-1-phosphate adenylyltransferase family. In terms of assembly, homotetramer.

It catalyses the reaction alpha-D-glucose 1-phosphate + ATP + H(+) = ADP-alpha-D-glucose + diphosphate. It functions in the pathway glycan biosynthesis; glycogen biosynthesis. In terms of biological role, involved in the biosynthesis of ADP-glucose, a building block required for the elongation reactions to produce glycogen. Catalyzes the reaction between ATP and alpha-D-glucose 1-phosphate (G1P) to produce pyrophosphate and ADP-Glc. In Teredinibacter turnerae (strain ATCC 39867 / T7901), this protein is Glucose-1-phosphate adenylyltransferase.